We begin with the raw amino-acid sequence, 828 residues long: DNA topoisomerase 3 (828 aa).

The Toprim domain occupies 4–149 (RILNVAEKPS…KFEFYRAHFS (146 aa)). The region spanning 167-617 (NEKDSIAVDT…STIEKYKQLY (451 aa)) is the Topo IA-type catalytic domain. The O-(5'-phospho-DNA)-tyrosine intermediate role is filled by Tyr361. Residues 763–828 (QQQQQQQQQQ…SDRNNNNFIF (66 aa)) are disordered.

This sequence belongs to the type IA topoisomerase family.

It catalyses the reaction ATP-independent breakage of single-stranded DNA, followed by passage and rejoining.. Releases the supercoiling and torsional tension of DNA introduced during the DNA replication and transcription by transiently cleaving and rejoining one strand of the DNA duplex. Introduces a single-strand break via transesterification at a target site in duplex DNA. The scissile phosphodiester is attacked by the catalytic tyrosine of the enzyme, resulting in the formation of a DNA-(5'-phosphotyrosyl)-enzyme intermediate and the expulsion of a 3'-OH DNA strand. The free DNA strand than undergoes passage around the unbroken strand thus removing DNA supercoils. Finally, in the religation step, the DNA 3'-OH attacks the covalent intermediate to expel the active-site tyrosine and restore the DNA phosphodiester backbone. This is DNA topoisomerase 3 (top3) from Dictyostelium discoideum (Social amoeba).